Here is a 673-residue protein sequence, read N- to C-terminus: Polygalacturonate 4-alpha-galacturonosyltransferase (673 aa).

Residues 1–22 are Cytoplasmic-facing; it reads MALKRGLSGVNRIRGSGGGSRS. A helical; Signal-anchor for type II membrane protein transmembrane segment spans residues 23–43; the sequence is VLVLLIFFCVFAPLCFFVGRG. Residues 44 to 673 lie on the Lumenal side of the membrane; the sequence is VYIDSSNDYS…PYLRRCNLHE (630 aa). A glycan (N-linked (GlcNAc...) asparagine) is linked at asparagine 103. The segment at 112–136 is disordered; that stretch reads GVDPSFRHSENPATPDVKSNNLNEK. Residues asparagine 382, asparagine 434, asparagine 538, and asparagine 585 are each glycosylated (N-linked (GlcNAc...) asparagine).

It belongs to the glycosyltransferase 8 family. In terms of tissue distribution, expressed in seedlings, inflorescences, flowers, siliques, pollen, roots, stems and leaves.

The protein resides in the golgi apparatus membrane. The enzyme catalyses [(1-&gt;4)-alpha-D-galacturonosyl](n) + UDP-alpha-D-galacturonate = [(1-&gt;4)-alpha-D-galacturonosyl](n+1) + UDP + H(+). The protein operates within glycan metabolism; pectin biosynthesis. Functionally, involved in pectin biosynthesis. Catalyzes the transfer of galacturonic acid from uridine 5'-diphosphogalacturonic acid onto the pectic polysaccharide homogalacturonan. This chain is Polygalacturonate 4-alpha-galacturonosyltransferase (GAUT1), found in Arabidopsis thaliana (Mouse-ear cress).